A 321-amino-acid polypeptide reads, in one-letter code: Cytochrome c biogenesis protein CcsA (321 aa).

The next 7 helical transmembrane spans lie at 17–37 (IISIVITIHLVTLLVHEIVGL), 43–63 (KGMIAAFFCITGLLVTRWIYS), 71–91 (LYESLMFLSWSFSIIHMVPKI), 143–163 (MLLSYAALLCGSLLSVALLVI), 225–245 (VISLGFTFLTIGILSGAVWAN), 258–273 (ETWAFITWTIFAIYLH), and 286–306 (AIVASMGFLIIWICYFGVNLL).

It belongs to the CcmF/CycK/Ccl1/NrfE/CcsA family. May interact with Ccs1.

It localises to the plastid. Its subcellular location is the chloroplast thylakoid membrane. Functionally, required during biogenesis of c-type cytochromes (cytochrome c6 and cytochrome f) at the step of heme attachment. This Liriodendron tulipifera (Tuliptree) protein is Cytochrome c biogenesis protein CcsA.